The primary structure comprises 228 residues: 2-C-methyl-D-erythritol 4-phosphate cytidylyltransferase (228 aa).

This sequence belongs to the IspD/TarI cytidylyltransferase family. IspD subfamily.

The enzyme catalyses 2-C-methyl-D-erythritol 4-phosphate + CTP + H(+) = 4-CDP-2-C-methyl-D-erythritol + diphosphate. It participates in isoprenoid biosynthesis; isopentenyl diphosphate biosynthesis via DXP pathway; isopentenyl diphosphate from 1-deoxy-D-xylulose 5-phosphate: step 2/6. Its function is as follows. Catalyzes the formation of 4-diphosphocytidyl-2-C-methyl-D-erythritol from CTP and 2-C-methyl-D-erythritol 4-phosphate (MEP). The polypeptide is 2-C-methyl-D-erythritol 4-phosphate cytidylyltransferase (Mannheimia succiniciproducens (strain KCTC 0769BP / MBEL55E)).